The following is a 357-amino-acid chain: Anthranilate phosphoribosyltransferase (357 aa).

5-phospho-alpha-D-ribose 1-diphosphate is bound by residues Gly-91, 94–95 (GD), Thr-99, 101–104 (NIST), 119–127 (KHGNRSVSS), and Ser-131. Gly-91 is a binding site for anthranilate. A Mg(2+)-binding site is contributed by Ser-103. Position 122 (Asn-122) interacts with anthranilate. Residue Arg-177 participates in anthranilate binding. The Mg(2+) site is built by Asp-235 and Glu-236.

This sequence belongs to the anthranilate phosphoribosyltransferase family. In terms of assembly, homodimer. Mg(2+) is required as a cofactor.

The enzyme catalyses N-(5-phospho-beta-D-ribosyl)anthranilate + diphosphate = 5-phospho-alpha-D-ribose 1-diphosphate + anthranilate. It participates in amino-acid biosynthesis; L-tryptophan biosynthesis; L-tryptophan from chorismate: step 2/5. Catalyzes the transfer of the phosphoribosyl group of 5-phosphorylribose-1-pyrophosphate (PRPP) to anthranilate to yield N-(5'-phosphoribosyl)-anthranilate (PRA). This is Anthranilate phosphoribosyltransferase from Shewanella baltica (strain OS155 / ATCC BAA-1091).